The following is a 148-amino-acid chain: Ribose-5-P isomerase B (148 aa).

8–9 (DE) is a binding site for D-ribulose 5-phosphate. Cysteine 65 serves as the catalytic Proton acceptor. Residues 66–70 (GTGIG), asparagine 99, arginine 132, and lysine 136 contribute to the D-ribulose 5-phosphate site.

This sequence belongs to the LacAB/RpiB family.

The catalysed reaction is aldehydo-D-ribose 5-phosphate = D-ribulose 5-phosphate. It functions in the pathway carbohydrate degradation; pentose phosphate pathway; D-ribose 5-phosphate from D-ribulose 5-phosphate (non-oxidative stage): step 1/1. Catalyzes the interconversion of ribulose-5-P and ribose-5-P. This chain is Ribose-5-P isomerase B, found in Listeria innocua serovar 6a (strain ATCC BAA-680 / CLIP 11262).